A 180-amino-acid polypeptide reads, in one-letter code: Large ribosomal subunit protein uL6 (180 aa).

It belongs to the universal ribosomal protein uL6 family. As to quaternary structure, part of the 50S ribosomal subunit.

In terms of biological role, this protein binds to the 23S rRNA, and is important in its secondary structure. It is located near the subunit interface in the base of the L7/L12 stalk, and near the tRNA binding site of the peptidyltransferase center. This chain is Large ribosomal subunit protein uL6, found in Clostridium botulinum (strain ATCC 19397 / Type A).